A 231-amino-acid polypeptide reads, in one-letter code: 2-C-methyl-D-erythritol 4-phosphate cytidylyltransferase (231 aa).

It belongs to the IspD/TarI cytidylyltransferase family. IspD subfamily.

It carries out the reaction 2-C-methyl-D-erythritol 4-phosphate + CTP + H(+) = 4-CDP-2-C-methyl-D-erythritol + diphosphate. Its pathway is isoprenoid biosynthesis; isopentenyl diphosphate biosynthesis via DXP pathway; isopentenyl diphosphate from 1-deoxy-D-xylulose 5-phosphate: step 2/6. Functionally, catalyzes the formation of 4-diphosphocytidyl-2-C-methyl-D-erythritol from CTP and 2-C-methyl-D-erythritol 4-phosphate (MEP). This chain is 2-C-methyl-D-erythritol 4-phosphate cytidylyltransferase, found in Mycobacterium bovis (strain BCG / Pasteur 1173P2).